Consider the following 206-residue polypeptide: Apoptosis regulator OPG045 (206 aa).

This sequence belongs to the orthopoxvirus OPG045 family. In terms of assembly, homodimer. Interacts with host pro-apoptotic protein BCL2L11 (via BH3 domain). Interacts with host NLRP1. Interacts with host BAK.

The protein localises to the host mitochondrion outer membrane. It localises to the host cytoplasm. Its function is as follows. Plays a role in evading host innate immune response by inhibiting host inflammasome activation. Interacts with and inhibits NLR-mediated interleukin-1 beta/IL1B production in infected cells. At the host mitochondria outer membrane, interacts with the BH3 domain of host BAK and prevents BAK from binding active BAX. In turn, host apoptosis is inhibited. The protein is Apoptosis regulator OPG045 (OPG045) of Vaccinia virus (strain L-IVP) (VACV).